The sequence spans 205 residues: DNA-directed RNA polymerase RPB5 homolog (205 aa).

The protein belongs to the archaeal RpoH/eukaryotic RPB5 RNA polymerase subunit family. In terms of assembly, part of the viral DNA-directed RNA polymerase that consists of 8 polII-like subunits (RPB1, RPB2, RPB3, RPB5, RPB6, RPB7, RPB9, RPB10), a capping enzyme and a termination factor.

The protein localises to the host cytoplasm. Its subcellular location is the virion. Functionally, component of the DNA-directed RNA polymerase (RNAP) that catalyzes the transcription in the cytoplasm of viral DNA into RNA using the four ribonucleoside triphosphates as substrates. This is DNA-directed RNA polymerase RPB5 homolog from Ornithodoros (relapsing fever ticks).